The primary structure comprises 334 residues: Malate dehydrogenase, cytoplasmic (334 aa).

Position 11-17 (G11–A17) interacts with NAD(+). Positions 92 and 98 each coordinate substrate. NAD(+) is bound by residues N105, Q112, and V129–N131. 2 residues coordinate substrate: N131 and R162. H187 functions as the Proton acceptor in the catalytic mechanism.

This sequence belongs to the LDH/MDH superfamily. MDH type 2 family. As to quaternary structure, homodimer.

It is found in the cytoplasm. The protein localises to the cytosol. It catalyses the reaction (S)-malate + NAD(+) = oxaloacetate + NADH + H(+). The catalysed reaction is (S)-2-hydroxyglutarate + NAD(+) = 2-oxoglutarate + NADH + H(+). Functionally, catalyzes the reduction of aromatic alpha-keto acids in the presence of NADH. Plays essential roles in the malate-aspartate shuttle and the tricarboxylic acid cycle, important in mitochondrial NADH supply for oxidative phosphorylation. Catalyzes the reduction of 2-oxoglutarate to 2-hydroxyglutarate, leading to elevated reactive oxygen species (ROS). The sequence is that of Malate dehydrogenase, cytoplasmic (mdh1) from Xenopus laevis (African clawed frog).